We begin with the raw amino-acid sequence, 159 residues long: Histone H2A (159 aa).

Over residues 1 to 10 (MDSTGTGAGG) the composition is skewed to gly residues. 2 disordered regions span residues 1 to 31 (MDSTGTGAGGKGKKGAAGRKVGGPRKKSVSR) and 133 to 159 (KTAEKASSGGSKEAKSPKKAAKSPKKA). Basic residues-rich tracts occupy residues 11–29 (KGKKGAAGRKVGGPRKKSV) and 149–159 (PKKAAKSPKKA). 2 consecutive short sequence motifs (SPKK motif) follow at residues 148–151 (SPKK) and 155–158 (SPKK).

This sequence belongs to the histone H2A family. As to quaternary structure, the nucleosome is a histone octamer containing two molecules each of H2A, H2B, H3 and H4 assembled in one H3-H4 heterotetramer and two H2A-H2B heterodimers. The octamer wraps approximately 147 bp of DNA.

The protein resides in the nucleus. It localises to the chromosome. Core component of nucleosome. Nucleosomes wrap and compact DNA into chromatin, limiting DNA accessibility to the cellular machineries which require DNA as a template. Histones thereby play a central role in transcription regulation, DNA repair, DNA replication and chromosomal stability. DNA accessibility is regulated via a complex set of post-translational modifications of histones, also called histone code, and nucleosome remodeling. The protein is Histone H2A of Zea mays (Maize).